A 203-amino-acid chain; its full sequence is ATP-dependent Clp protease proteolytic subunit (203 aa).

Residue serine 103 is the Nucleophile of the active site. Histidine 128 is an active-site residue.

It belongs to the peptidase S14 family. As to quaternary structure, fourteen ClpP subunits assemble into 2 heptameric rings which stack back to back to give a disk-like structure with a central cavity, resembling the structure of eukaryotic proteasomes.

It is found in the cytoplasm. It carries out the reaction Hydrolysis of proteins to small peptides in the presence of ATP and magnesium. alpha-casein is the usual test substrate. In the absence of ATP, only oligopeptides shorter than five residues are hydrolyzed (such as succinyl-Leu-Tyr-|-NHMec, and Leu-Tyr-Leu-|-Tyr-Trp, in which cleavage of the -Tyr-|-Leu- and -Tyr-|-Trp bonds also occurs).. Cleaves peptides in various proteins in a process that requires ATP hydrolysis. Has a chymotrypsin-like activity. Plays a major role in the degradation of misfolded proteins. The sequence is that of ATP-dependent Clp protease proteolytic subunit from Nitrosococcus oceani (strain ATCC 19707 / BCRC 17464 / JCM 30415 / NCIMB 11848 / C-107).